The chain runs to 261 residues: RING finger and CHY zinc finger domain-containing protein 1 (261 aa).

The CHY-type zinc finger occupies 13-80 (QERGQRGCEH…AQQTCEECST (68 aa)). Zn(2+) contacts are provided by Cys-20, His-22, Cys-33, Cys-34, Cys-40, Cys-43, His-44, His-50, Cys-62, Cys-65, Cys-75, Cys-78, Cys-87, Cys-90, His-101, Cys-102, Cys-105, Cys-108, His-118, Cys-119, Cys-122, Cys-125, His-134, and Cys-136. The CTCHY-type zinc-finger motif lies at 82 to 144 (FGEYYCDICH…KCIENVSRQN (63 aa)). Residues 145–189 (CPICLEDIHTSRVVAHVLPCGHLLHRTCYEEMLKEGYRCPLCMHS) form an RING-type zinc finger. Ser-257 carries the post-translational modification Phosphoserine.

As to quaternary structure, monomer and homodimer. Interacts with AR, MDM2, KAT5, PLAG1, PLAGL2, COPE, UBE2D2 and GORAB/NTKLBP1. Subject to ubiquitination and proteasomal degradation. Interaction with PLAGL2 or KAT5 enhances protein stability.

It is found in the nucleus. The protein resides in the nucleus speckle. The protein localises to the cytoplasm. The enzyme catalyses S-ubiquitinyl-[E2 ubiquitin-conjugating enzyme]-L-cysteine + [acceptor protein]-L-lysine = [E2 ubiquitin-conjugating enzyme]-L-cysteine + N(6)-ubiquitinyl-[acceptor protein]-L-lysine.. It functions in the pathway protein modification; protein ubiquitination. In terms of biological role, E3 ubiquitin-protein ligase that mediates ubiquitination of target proteins, including p53/TP53, TP73, HDAC1 and CDKN1B. Mediates ubiquitination and degradation of p53/TP53; preferentially acts on tetrameric p53/TP53. Catalyzes monoubiquitinates the translesion DNA polymerase POLH. Involved in the ribosome-associated quality control (RQC) pathway, which mediates the extraction of incompletely synthesized nascent chains from stalled ribosomes: RCHY1 acts downstream of NEMF and recognizes CAT tails associated with stalled nascent chains, leading to their ubiquitination and degradation. Has no E3 ubiquitin-protein ligase activity. This is RING finger and CHY zinc finger domain-containing protein 1 (RCHY1) from Homo sapiens (Human).